We begin with the raw amino-acid sequence, 257 residues long: Phosphate import ATP-binding protein PstB (257 aa).

The region spanning 11-252 (IQVRDLNFYY…PAKKQTEDYI (242 aa)) is the ABC transporter domain. 43-50 (GPSGCGKS) provides a ligand contact to ATP.

This sequence belongs to the ABC transporter superfamily. Phosphate importer (TC 3.A.1.7) family. In terms of assembly, the complex is composed of two ATP-binding proteins (PstB), two transmembrane proteins (PstC and PstA) and a solute-binding protein (PstS).

The protein resides in the cell inner membrane. The enzyme catalyses phosphate(out) + ATP + H2O = ADP + 2 phosphate(in) + H(+). Functionally, part of the ABC transporter complex PstSACB involved in phosphate import. Responsible for energy coupling to the transport system. This chain is Phosphate import ATP-binding protein PstB, found in Salmonella paratyphi A (strain ATCC 9150 / SARB42).